The following is a 507-amino-acid chain: Arabinose import ATP-binding protein AraG (507 aa).

ABC transporter domains lie at 14–249 (LRFN…MVGR) and 249–505 (RDIQ…LPRT). 46–53 (GENGAGKS) contributes to the ATP binding site.

It belongs to the ABC transporter superfamily. Arabinose importer (TC 3.A.1.2.2) family. In terms of assembly, the complex is composed of two ATP-binding proteins (AraG), two transmembrane proteins (AraH) and a solute-binding protein (AraF).

It localises to the cell inner membrane. It carries out the reaction L-arabinose(out) + ATP + H2O = L-arabinose(in) + ADP + phosphate + H(+). Part of the ABC transporter complex AraFGH involved in arabinose import. Responsible for energy coupling to the transport system. This Pseudomonas syringae pv. syringae (strain B728a) protein is Arabinose import ATP-binding protein AraG.